The primary structure comprises 911 residues: Alpha-actinin-4 (911 aa).

Positions 1–30 (MVDYHAASQSYQYGPSSAGNGAGGGGSMGD) are disordered. Positions 1 to 269 (MVDYHAASQS…YVSSFYHAFS (269 aa)) are actin-binding. The tract at residues 12–26 (QYGPSSAGNGAGGGG) is interaction with VCL. Residue Tyr31 is modified to Phosphotyrosine. An interaction with VCL region spans residues 40-61 (RDLLLDPAWEKQQRKTFTAWCN). 2 consecutive Calponin-homology (CH) domains span residues 50 to 154 (KQQR…LRFA) and 163 to 269 (TSAK…HAFS). The LXXLL motif signature appears at 84–88 (LMLLL). The interval 108–126 (KINNVNKALDFIASKGVKL) is interaction with VCL. At Lys114 the chain carries N6-acetyllysine. The segment at 177-192 (TAPYKNVNVQNFHISW) is polyphosphoinositide (PIP2)-binding. Residue Lys214 is modified to N6-acetyllysine. Phosphothreonine is present on Thr249. 4 Spectrin repeats span residues 293–403 (HLME…WLLN), 413–518 (HLAE…ALEK), 528–639 (QLHL…ALLE), and 649–752 (HLRR…EVEN). Lys592 and Lys625 each carry N6-acetyllysine. Ser696 carries the phosphoserine modification. Residues 736-911 (WEQLLTTIAR…STALYGESDL (176 aa)) are mediates interaction with MICALL2. EF-hand domains lie at 765–800 (EQMQ…LGYD) and 806–841 (QGEA…ETTD). Residue Asp778 coordinates Ca(2+). At Lys779 the chain carries N6-acetyllysine. Asp780 and Glu789 together coordinate Ca(2+). Position 859 is an N6-acetyllysine (Lys859). Ser909 carries the post-translational modification Phosphoserine.

The protein belongs to the alpha-actinin family. In terms of assembly, homodimer; antiparallel. Identified in a IGF2BP1-dependent mRNP granule complex containing untranslated mRNAs. Component of the CART complex, at least composed of ACTN4, HGS/HRS, MYO5B and TRIM3. Binds TRIM3 at the N-terminus. Interacts with MAGI1. Interacts with PDLIM2. Identified in a complex with CASK, IQGAP1, MAGI2, NPHS1, SPTAN1 and SPTBN1. Interacts with MICALL2 (preferentially in opened conformation); stimulated by RAB13 activation. Interacts with PPARG and RARA. Binds to VCL; this interaction triggers VCL conformational changes. Interacts with SEPTIN14. Interacts with IGSF8.

The protein resides in the nucleus. It localises to the cytoplasm. Its subcellular location is the cell junction. It is found in the cytoskeleton. The protein localises to the stress fiber. The protein resides in the perinuclear region. F-actin cross-linking protein which is thought to anchor actin to a variety of intracellular structures. This is a bundling protein. Probably involved in vesicular trafficking via its association with the CART complex. The CART complex is necessary for efficient transferrin receptor recycling but not for EGFR degradation. Involved in tight junction assembly in epithelial cells probably through interaction with MICALL2. Links MICALL2 to the actin cytoskeleton and recruits it to the tight junctions. May also function as a transcriptional coactivator, stimulating transcription mediated by the nuclear hormone receptors PPARG and RARA. Association with IGSF8 regulates the immune synapse formation and is required for efficient T-cell activation. The protein is Alpha-actinin-4 of Pongo abelii (Sumatran orangutan).